Consider the following 68-residue polypeptide: Cytotoxic linear peptide (68 aa).

Positions 1 to 23 (MKTQFAILLIALVLFQMFSQSEA) are cleaved as a signal peptide. Leu36 is modified (leucine amide). Residues 40–68 (GLNELDDLDELFDGEISQADIDFLKELMS) constitute a propeptide that is removed on maturation.

This sequence belongs to the non-disulfide-bridged peptide (NDBP) superfamily. Short antimicrobial peptide (group 4) family. In terms of tissue distribution, expressed by the venom gland.

It is found in the secreted. The protein resides in the target cell membrane. Its function is as follows. Amphipathic peptide that has antibacterial activities. This is Cytotoxic linear peptide from Pandinus cavimanus (Tanzanian red clawed scorpion).